The primary structure comprises 339 residues: Ketol-acid reductoisomerase (NADP(+)) (339 aa).

Residues 1 to 182 (MRVYYDRDAD…GGGRSGIIET (182 aa)) form the KARI N-terminal Rossmann domain. NADP(+)-binding positions include 24–27 (YGSQ), Lys-48, Ser-51, Thr-53, and 83–86 (DELQ). His-108 is a catalytic residue. Gly-134 serves as a coordination point for NADP(+). In terms of domain architecture, KARI C-terminal knotted spans 183-328 (NFREECETDL…AKLRGMMPWI (146 aa)). Positions 191, 195, 227, and 231 each coordinate Mg(2+). Ser-252 is a substrate binding site.

Belongs to the ketol-acid reductoisomerase family. Mg(2+) is required as a cofactor.

It catalyses the reaction (2R)-2,3-dihydroxy-3-methylbutanoate + NADP(+) = (2S)-2-acetolactate + NADPH + H(+). It carries out the reaction (2R,3R)-2,3-dihydroxy-3-methylpentanoate + NADP(+) = (S)-2-ethyl-2-hydroxy-3-oxobutanoate + NADPH + H(+). Its pathway is amino-acid biosynthesis; L-isoleucine biosynthesis; L-isoleucine from 2-oxobutanoate: step 2/4. It functions in the pathway amino-acid biosynthesis; L-valine biosynthesis; L-valine from pyruvate: step 2/4. In terms of biological role, involved in the biosynthesis of branched-chain amino acids (BCAA). Catalyzes an alkyl-migration followed by a ketol-acid reduction of (S)-2-acetolactate (S2AL) to yield (R)-2,3-dihydroxy-isovalerate. In the isomerase reaction, S2AL is rearranged via a Mg-dependent methyl migration to produce 3-hydroxy-3-methyl-2-ketobutyrate (HMKB). In the reductase reaction, this 2-ketoacid undergoes a metal-dependent reduction by NADPH to yield (R)-2,3-dihydroxy-isovalerate. The sequence is that of Ketol-acid reductoisomerase (NADP(+)) from Rhizobium johnstonii (strain DSM 114642 / LMG 32736 / 3841) (Rhizobium leguminosarum bv. viciae).